The chain runs to 620 residues: bZIP transcription factor 49 (620 aa).

Residues 1 to 287 are Cytoplasmic-facing; that stretch reads MAEPVLEDTY…VAKVKKFKKV (287 aa). Residues 109–135 are compositionally biased toward polar residues; the sequence is SSCYNRESPTDSDFSGTSQSLSFSGQD. The disordered stretch occupies residues 109 to 155; that stretch reads SSCYNRESPTDSDFSGTSQSLSFSGQDSAKRKTEIEEDSSDESRRLG. The bZIP domain occupies 172–235; the sequence is EKKKNVRLVR…VTLRQQMGTR (64 aa). Residues 173 to 205 form a basic motif region; sequence KKKNVRLVRNRESAHLSRQRKKHYVEELEDKVK. The tract at residues 211–218 is leucine-zipper; sequence ISELSSKM. A helical transmembrane segment spans residues 288 to 308; the sequence is ASFSVFGFLFCMFLFGALVNI. At 309-620 the chain is on the lumenal side; that stretch reads SYGEYKSNYV…RPDVPHLMTS (312 aa). Disordered regions lie at residues 343-364, 398-460, and 505-557; these read DSDQ…PRNS, ARDS…SNDQ, and PASP…RETK. N-linked (GlcNAc...) asparagine glycosylation is found at N351 and N363. Polar residues predominate over residues 352-364; that stretch reads VSETENLGPPRNS. Basic and acidic residues-rich tracts occupy residues 398–409 and 432–441; these read ARDSETKNEEGK and RTRDVSKHLY. Composition is skewed to polar residues over residues 447–460 and 508–519; these read GLSS…SNDQ and PHTQQCKNTSDT. N-linked (GlcNAc...) asparagine glycosylation is present at N515. Residues 526-529 carry the RRIL cleavage motif motif; that stretch reads RRIL. N-linked (GlcNAc...) asparagine glycans are attached at residues N539 and N546. Residues 540 to 557 are compositionally biased toward basic and acidic residues; sequence LTKEDHNSSSKDKFRETK.

It belongs to the bZIP family. As to quaternary structure, interacts with BZIP28.

The protein resides in the endoplasmic reticulum membrane. The protein localises to the nucleus. Transcriptional activator involved in stress responses. This is bZIP transcription factor 49 from Arabidopsis thaliana (Mouse-ear cress).